The following is a 477-amino-acid chain: Protein DETOXIFICATION 5 (477 aa).

A run of 12 helical transmembrane segments spans residues 38–58 (AAPM…SVMV), 72–92 (LATA…VGAL), 113–133 (FSAI…WFYM), 146–166 (ISKV…AQAV), 187–207 (AITT…AFGL), 211–231 (GAAL…ALYV), 263–283 (AAMT…SGLL), 292–312 (VLSI…GIGA), 333–353 (AVFA…TLLF), 376–396 (LSSL…LDGV), 411–431 (VVAY…WGHM), and 436–456 (LWIG…IVTA).

It belongs to the multi antimicrobial extrusion (MATE) (TC 2.A.66.1) family.

Its subcellular location is the membrane. The sequence is that of Protein DETOXIFICATION 5 from Arabidopsis thaliana (Mouse-ear cress).